An 829-amino-acid chain; its full sequence is Periplasmic nitrate reductase (829 aa).

The segment at residues 1–29 (MKMTRRAFVKANAAASAAAVAGITLPASA) is a signal peptide (tat-type signal). Positions 41–97 (ITWDKAPCRFCGTGCSVLVGTQNGKVVATQGDPEAPVNKGLNCIKGYFLSKIMYGQD) constitute a 4Fe-4S Mo/W bis-MGD-type domain. Residues cysteine 48, cysteine 51, cysteine 55, and cysteine 83 each contribute to the [4Fe-4S] cluster site. Mo-bis(molybdopterin guanine dinucleotide) is bound by residues lysine 85, glutamine 152, asparagine 177, cysteine 181, 214–221 (WGSNMAEM), 245–249 (STYYH), 264–266 (QSD), methionine 374, glutamine 378, asparagine 484, 510–511 (SD), lysine 533, aspartate 560, and 718–727 (TGRVLEHWHT). Substrate is bound at residue phenylalanine 794. Mo-bis(molybdopterin guanine dinucleotide) contacts are provided by asparagine 802 and lysine 819.

It belongs to the prokaryotic molybdopterin-containing oxidoreductase family. NasA/NapA/NarB subfamily. As to quaternary structure, component of the periplasmic nitrate reductase NapAB complex composed of NapA and NapB. The cofactor is [4Fe-4S] cluster. Requires Mo-bis(molybdopterin guanine dinucleotide) as cofactor. Predicted to be exported by the Tat system. The position of the signal peptide cleavage has not been experimentally proven.

The protein localises to the periplasm. It catalyses the reaction 2 Fe(II)-[cytochrome] + nitrate + 2 H(+) = 2 Fe(III)-[cytochrome] + nitrite + H2O. Functionally, catalytic subunit of the periplasmic nitrate reductase complex NapAB. Receives electrons from NapB and catalyzes the reduction of nitrate to nitrite. The polypeptide is Periplasmic nitrate reductase (Vibrio campbellii (strain ATCC BAA-1116)).